The primary structure comprises 378 residues: uncharacterized protein (378 aa).

Belongs to the IIV-6 329R family.

This is an uncharacterized protein from Acheta domesticus (House cricket).